The following is an 816-amino-acid chain: Neuroligin-4, X-linked (816 aa).

An N-terminal signal peptide occupies residues 1–41; that stretch reads MSRPQGLLWLPLLFTPVCVMLNSNVLLWLTALAIKFTLIDS. Over 42–676 the chain is Extracellular; the sequence is QAQYPVVNTN…TKRDYSTELS (635 aa). N102 is a glycosylation site (N-linked (GlcNAc...) asparagine). 2 disulfides stabilise this stretch: C110-C146 and C306-C317. Residues 359-364 are interaction with NRXN1; the sequence is QGEFLN. A disulfide bridge links C476 with C510. N511 is a glycosylation site (N-linked (GlcNAc...) asparagine). The interval 636 to 659 is disordered; it reads TKRPAITPANNPKHSKDPHKTGPE. The segment covering 649–658 has biased composition (basic and acidic residues); that stretch reads HSKDPHKTGP. A helical transmembrane segment spans residues 677–697; that stretch reads VTIAVGASLLFLNILAFAALY. The Cytoplasmic portion of the chain corresponds to 698-816; the sequence is YKKDKRRHET…LPHGHSTTRV (119 aa). S712 carries the post-translational modification Phosphoserine.

The protein belongs to the type-B carboxylesterase/lipase family. Homodimer. Interacts with NRXN1 in a calcium-dependent manner. Interaction with neurexins is mediated by heparan sulfate glycan modification on neurexin. Interacts through its C-terminus with DLG4/PSD-95 third PDZ domain. Expressed at highest levels in heart. Expressed at lower levels in liver, skeletal muscle and pancreas and at very low levels in brain.

It is found in the cell membrane. Its subcellular location is the postsynaptic density membrane. In terms of biological role, cell surface protein involved in cell-cell-interactions via its interactions with neurexin family members. This Homo sapiens (Human) protein is Neuroligin-4, X-linked (NLGN4X).